A 260-amino-acid polypeptide reads, in one-letter code: Ditrans,polycis-undecaprenyl-diphosphate synthase ((2E,6E)-farnesyl-diphosphate specific) (260 aa).

Residue aspartate 20 is part of the active site. Aspartate 20 provides a ligand contact to Mg(2+). Substrate is bound by residues 21–24 (GNGR), tryptophan 25, arginine 33, histidine 37, and 65–67 (SSE). Asparagine 68 (proton acceptor) is an active-site residue. Residues tryptophan 69, arginine 71, and arginine 188 each coordinate substrate. Histidine 193 provides a ligand contact to Mg(2+). Residue 194-196 (RIS) coordinates substrate. Position 207 (glutamate 207) interacts with Mg(2+).

Belongs to the UPP synthase family. Homodimer. Mg(2+) is required as a cofactor.

It carries out the reaction 8 isopentenyl diphosphate + (2E,6E)-farnesyl diphosphate = di-trans,octa-cis-undecaprenyl diphosphate + 8 diphosphate. In terms of biological role, catalyzes the sequential condensation of isopentenyl diphosphate (IPP) with (2E,6E)-farnesyl diphosphate (E,E-FPP) to yield (2Z,6Z,10Z,14Z,18Z,22Z,26Z,30Z,34E,38E)-undecaprenyl diphosphate (di-trans,octa-cis-UPP). UPP is the precursor of glycosyl carrier lipid in the biosynthesis of bacterial cell wall polysaccharide components such as peptidoglycan and lipopolysaccharide. This chain is Ditrans,polycis-undecaprenyl-diphosphate synthase ((2E,6E)-farnesyl-diphosphate specific), found in Wigglesworthia glossinidia brevipalpis.